A 260-amino-acid chain; its full sequence is Thrombin-like enzyme flavoxobin (260 aa).

The signal sequence occupies residues 1 to 18 (MVLIRVLANLLILQLSYA). The propeptide occupies 19–24 (QKSSEL). In terms of domain architecture, Peptidase S1 spans 25–251 (VIGGDECNIN…YNAWIQSIIA (227 aa)). 6 disulfide bridges follow: Cys-31-Cys-165, Cys-52-Cys-68, Cys-100-Cys-258, Cys-144-Cys-212, Cys-176-Cys-191, and Cys-202-Cys-227. Active-site charge relay system residues include His-67 and Asp-112. Ser-206 (charge relay system) is an active-site residue.

It belongs to the peptidase S1 family. Snake venom subfamily. As to quaternary structure, monomer. In terms of tissue distribution, expressed by the venom gland.

Its subcellular location is the secreted. The catalysed reaction is Selective cleavage of Arg-|-Xaa bond in fibrinogen, to form fibrin, and release fibrinopeptide A. The specificity of further degradation of fibrinogen varies with species origin of the enzyme.. Inhibited by alpha(2)-macroglobulin, diisopropylfluorophosphate (DFP) and PMSF. Low inhibition by tosyl-L-lysine chloromethyl ketone. Functionally, thrombin-like snake venom serine protease that clots fibrinogen (FGA) by releasing fibrinopeptide A. According to PubMed:8585090, only cleaves rabbit fibrinogen, whereas no specificity is described in PubMed:3910643 (tests done on bovine fibrinogen). Also acts as a C3 convertase that independently cleaves human C3 and kick-starts the complement cascade. Also increases urokinase-type plasminogen activator (PLAU) and plasminogen activator inhibitor (SERPINE1) in cultured bovine pulmonary artery endothelial cells. Dose-dependently inhibits collagen-induced platelet aggregation. This Protobothrops flavoviridis (Habu) protein is Thrombin-like enzyme flavoxobin (TLF1).